Reading from the N-terminus, the 96-residue chain is Probable Fe(2+)-trafficking protein (96 aa).

Residues 21 to 40 form a disordered region; the sequence is LPKMPHPPFPNKKGQELQET.

It belongs to the Fe(2+)-trafficking protein family.

In terms of biological role, could be a mediator in iron transactions between iron acquisition and iron-requiring processes, such as synthesis and/or repair of Fe-S clusters in biosynthetic enzymes. This is Probable Fe(2+)-trafficking protein from Psychrobacter arcticus (strain DSM 17307 / VKM B-2377 / 273-4).